The sequence spans 284 residues: 4-diphosphocytidyl-2-C-methyl-D-erythritol kinase (284 aa).

Lys17 is an active-site residue. ATP is bound at residue 100-110 (PMGGGLGGGSS). The active site involves Asp142.

This sequence belongs to the GHMP kinase family. IspE subfamily.

The catalysed reaction is 4-CDP-2-C-methyl-D-erythritol + ATP = 4-CDP-2-C-methyl-D-erythritol 2-phosphate + ADP + H(+). The protein operates within isoprenoid biosynthesis; isopentenyl diphosphate biosynthesis via DXP pathway; isopentenyl diphosphate from 1-deoxy-D-xylulose 5-phosphate: step 3/6. Catalyzes the phosphorylation of the position 2 hydroxy group of 4-diphosphocytidyl-2C-methyl-D-erythritol. The protein is 4-diphosphocytidyl-2-C-methyl-D-erythritol kinase of Aromatoleum aromaticum (strain DSM 19018 / LMG 30748 / EbN1) (Azoarcus sp. (strain EbN1)).